The sequence spans 298 residues: uncharacterized protein (298 aa).

This is an uncharacterized protein from Methanocaldococcus jannaschii (strain ATCC 43067 / DSM 2661 / JAL-1 / JCM 10045 / NBRC 100440) (Methanococcus jannaschii).